The primary structure comprises 318 residues: Aspartate carbamoyltransferase catalytic subunit (318 aa).

Arginine 59 and threonine 60 together coordinate carbamoyl phosphate. Lysine 87 is a binding site for L-aspartate. Residues arginine 109, histidine 137, and glutamine 140 each coordinate carbamoyl phosphate. Residues arginine 170 and arginine 224 each coordinate L-aspartate. Carbamoyl phosphate is bound by residues glycine 265 and proline 266.

The protein belongs to the aspartate/ornithine carbamoyltransferase superfamily. ATCase family. As to quaternary structure, heterododecamer (2C3:3R2) of six catalytic PyrB chains organized as two trimers (C3), and six regulatory PyrI chains organized as three dimers (R2).

The enzyme catalyses carbamoyl phosphate + L-aspartate = N-carbamoyl-L-aspartate + phosphate + H(+). Its pathway is pyrimidine metabolism; UMP biosynthesis via de novo pathway; (S)-dihydroorotate from bicarbonate: step 2/3. Functionally, catalyzes the condensation of carbamoyl phosphate and aspartate to form carbamoyl aspartate and inorganic phosphate, the committed step in the de novo pyrimidine nucleotide biosynthesis pathway. This chain is Aspartate carbamoyltransferase catalytic subunit, found in Allorhizobium ampelinum (strain ATCC BAA-846 / DSM 112012 / S4) (Agrobacterium vitis (strain S4)).